The primary structure comprises 95 residues: Large ribosomal subunit protein bL25 (95 aa).

This sequence belongs to the bacterial ribosomal protein bL25 family. Part of the 50S ribosomal subunit; part of the 5S rRNA/L5/L18/L25 subcomplex. Contacts the 5S rRNA. Binds to the 5S rRNA independently of L5 and L18.

Functionally, this is one of the proteins that binds to the 5S RNA in the ribosome where it forms part of the central protuberance. This Shewanella piezotolerans (strain WP3 / JCM 13877) protein is Large ribosomal subunit protein bL25.